Reading from the N-terminus, the 1004-residue chain is Zinc finger protein 316 (1004 aa).

The disordered stretch occupies residues 1–148; that stretch reads MAALHTTPDS…EEEEDEDEDD (148 aa). A2 is modified (N-acetylalanine). A Phosphothreonine modification is found at T7. S10 is modified (phosphoserine). Positions 21 to 60 are enriched in acidic residues; sequence GSECDPDQEEEEEEEEKGEEVQEVEEEEEEIVVEEEEEGV. The segment covering 61–72 has biased composition (low complexity); it reads AEVVQDAQVEAV. Acidic residues predominate over residues 73-95; it reads AEVEVEADVEEEDVKEVLAEEEC. S112 bears the Phosphoserine mark. Acidic residues predominate over residues 132–148; that stretch reads EDLEEEEEEEEDEDEDD. Residues 158–229 form the KRAB domain; that stretch reads VTFEDVAVYF…DSPRPEEGDI (72 aa). 5 consecutive C2H2-type zinc fingers follow at residues 345 to 367, 373 to 395, 401 to 423, 429 to 451, and 457 to 479; these read TTCDVCGKVFPHRSRLAKHQRYH, FGCEECGKGFVYRSHLAIHQRTH, FPCPDCGKRFVYKSHLVTHRRIH, YRCAFCGAGFGRRSYLVTHQRTH, and YPCSHCGRSFSQSSALARHQAVH. The C2H2-type 6; degenerate zinc-finger motif lies at 485–512; sequence HCCPDCGQAFRLRADFQRHRRGGGCAEA. The segment at 508–574 is disordered; sequence GCAEAGGDGP…TPSGKVDPAP (67 aa). Residues 531 to 557 show a composition bias toward acidic residues; the sequence is EDTDPGPEGSEVGEADGEAEAAAEERE. 5 C2H2-type zinc fingers span residues 691 to 713, 719 to 741, 747 to 769, 775 to 797, and 803 to 825; these read WICSDCGKTFGRRAALAKHQRYH, HRCADCGKSFVYGSHLARHRRTH, FPCPECGARFARGSHLAAHVRGH, FVCGVCGAGFSRRAHLTAHGRAH, and YACGECGRRFGQSAALTRHQWAH. Residue K829 forms a Glycyl lysine isopeptide (Lys-Gly) (interchain with G-Cter in SUMO2) linkage. C2H2-type zinc fingers lie at residues 831–853, 859–881, 887–909, and 915–937; these read HRCPDCGKGFGHSSDFKRHRRTH, FRCADCGRGFAQRSNLAKHRRGH, FPCPECGKRFSQRSVLVTHQRTH, and YACANCGRRFSQSSHLLTHMKTH. Positions 936–976 are disordered; the sequence is THRGATAAPGSGSAPAPAPKPEAAAKGPSSAGPGERGSALL. Positions 939–968 are enriched in low complexity; it reads GATAAPGSGSAPAPAPKPEAAAKGPSSAGP. K955 participates in a covalent cross-link: Glycyl lysine isopeptide (Lys-Gly) (interchain with G-Cter in SUMO2).

The protein belongs to the krueppel C2H2-type zinc-finger protein family.

Its subcellular location is the nucleus. In terms of biological role, may be involved in transcriptional regulation. The chain is Zinc finger protein 316 (ZNF316) from Homo sapiens (Human).